Reading from the N-terminus, the 311-residue chain is VQ motif-containing protein 9 (311 aa).

Residues 1 to 27 (MDKSCNSSGDSSAVSASATSSTGNNTT) show a composition bias toward low complexity. Residues 1–78 (MDKSCNSSGD…QINQGNLHQH (78 aa)) form a disordered region. The short motif at 90-99 (FRDVVQKLTG) is the VQ element. Disordered regions lie at residues 103 to 125 (HERI…SSRL), 228 to 266 (QQEN…PPLF), and 290 to 311 (GQLG…YKGH). Positions 240–249 (FPPPHPPPPS) are enriched in pro residues. Positions 290–302 (GQLGFPVSPTTVP) are enriched in low complexity.

Interacts (via N-terminus) with WRKY8. In terms of tissue distribution, highly expressed in roots and at lower levels in rosette leaves, cauline leaves, stems, flowers and siliques.

It is found in the nucleus. Functions as a negative regulator of salt stress response. Functions as a repressor of WRKY8 transcription factor by decreasing the DNA-binding activity of WRKY8 and acts antagonistically with WRKY8 to regulate sodium and potassium homeostasis under salt stress. The chain is VQ motif-containing protein 9 from Arabidopsis thaliana (Mouse-ear cress).